Reading from the N-terminus, the 197-residue chain is Isopentenyl-diphosphate Delta-isomerase (197 aa).

Mn(2+) contacts are provided by histidine 41 and histidine 48. The 138-residue stretch at 46–183 (RLHRAFSVFL…AWFMTVLDAA (138 aa)) folds into the Nudix hydrolase domain. The active site involves cysteine 83. Cysteine 83 contributes to the Mg(2+) binding site. Histidine 85 contributes to the Mn(2+) binding site. Position 103 (glutamate 103) interacts with Mg(2+). Residues glutamate 130 and glutamate 132 each coordinate Mn(2+). Glutamate 132 is a catalytic residue.

Belongs to the IPP isomerase type 1 family. Mg(2+) serves as cofactor. Requires Mn(2+) as cofactor.

It is found in the cytoplasm. The catalysed reaction is isopentenyl diphosphate = dimethylallyl diphosphate. The protein operates within isoprenoid biosynthesis; dimethylallyl diphosphate biosynthesis; dimethylallyl diphosphate from isopentenyl diphosphate: step 1/1. Functionally, catalyzes the 1,3-allylic rearrangement of the homoallylic substrate isopentenyl (IPP) to its highly electrophilic allylic isomer, dimethylallyl diphosphate (DMAPP). This chain is Isopentenyl-diphosphate Delta-isomerase, found in Streptomyces coelicolor (strain ATCC BAA-471 / A3(2) / M145).